A 282-amino-acid chain; its full sequence is 2-dehydro-3-deoxyphosphooctonate aldolase (282 aa).

Belongs to the KdsA family.

The protein localises to the cytoplasm. It catalyses the reaction D-arabinose 5-phosphate + phosphoenolpyruvate + H2O = 3-deoxy-alpha-D-manno-2-octulosonate-8-phosphate + phosphate. It functions in the pathway carbohydrate biosynthesis; 3-deoxy-D-manno-octulosonate biosynthesis; 3-deoxy-D-manno-octulosonate from D-ribulose 5-phosphate: step 2/3. The protein operates within bacterial outer membrane biogenesis; lipopolysaccharide biosynthesis. This is 2-dehydro-3-deoxyphosphooctonate aldolase from Bartonella bacilliformis (strain ATCC 35685 / KC583 / Herrer 020/F12,63).